A 99-amino-acid chain; its full sequence is Integration host factor subunit alpha (99 aa).

The segment at 49–73 is disordered; it reads FGNFDLRDKNQRPGRNPKTGEDIPI.

It belongs to the bacterial histone-like protein family. In terms of assembly, heterodimer of an alpha and a beta chain.

Functionally, this protein is one of the two subunits of integration host factor, a specific DNA-binding protein that functions in genetic recombination as well as in transcriptional and translational control. In Shigella boydii serotype 18 (strain CDC 3083-94 / BS512), this protein is Integration host factor subunit alpha.